Consider the following 419-residue polypeptide: MDSIKNLIVTLGENAKNAAKTLRCATTVAKNNTLINIASQIDQNRASIFKANNQDLVNGKNKGLETTLLDRLMLDEERLNGVIESLNQIINLPDPIGEITDLKYQPSGIQVGKMRVPLGVLGIIYESRPNVTIDAAALCLKSGNSVILRGGSEAIHSNYALYTCVRQGIKQAGLNENCAQLINTQNHEAVIELVKASDYVDAIIPRGGKGLVEAISNSAKTPVIKHLNGICHTYIDKDADKKKAISIAFNAKTRRYGVCNATETLLVHACAVSRILPKLIAQYLTKGVELRGCKETLKLSNKIIAATEKDWNTEYLDAILSIRIVNSMSEAIKHIDKHGSGHTESIVSENYTRSRRFITEVDSASVMINASTGFADGFEYGLGAEIGISTDKFHVRGPVGLEGLTSQKFIVLGDGHIRQ.

It belongs to the gamma-glutamyl phosphate reductase family.

Its subcellular location is the cytoplasm. The catalysed reaction is L-glutamate 5-semialdehyde + phosphate + NADP(+) = L-glutamyl 5-phosphate + NADPH + H(+). The protein operates within amino-acid biosynthesis; L-proline biosynthesis; L-glutamate 5-semialdehyde from L-glutamate: step 2/2. Functionally, catalyzes the NADPH-dependent reduction of L-glutamate 5-phosphate into L-glutamate 5-semialdehyde and phosphate. The product spontaneously undergoes cyclization to form 1-pyrroline-5-carboxylate. The sequence is that of Gamma-glutamyl phosphate reductase from Ruthia magnifica subsp. Calyptogena magnifica.